The sequence spans 921 residues: Leucine--tRNA ligase (921 aa).

Positions 80 to 90 (PYPSGKLHMGH) match the 'HIGH' region motif. Residues 667–671 (KMSKS) carry the 'KMSKS' region motif. Residue Lys670 coordinates ATP.

The protein belongs to the class-I aminoacyl-tRNA synthetase family.

The protein localises to the cytoplasm. The enzyme catalyses tRNA(Leu) + L-leucine + ATP = L-leucyl-tRNA(Leu) + AMP + diphosphate. In Psychrobacter arcticus (strain DSM 17307 / VKM B-2377 / 273-4), this protein is Leucine--tRNA ligase.